The primary structure comprises 311 residues: tRNA-cytidine(32) 2-sulfurtransferase (311 aa).

The PP-loop motif signature appears at 47–52 (SGGKDS). [4Fe-4S] cluster contacts are provided by cysteine 122, cysteine 125, and cysteine 213.

This sequence belongs to the TtcA family. Homodimer. Mg(2+) is required as a cofactor. Requires [4Fe-4S] cluster as cofactor.

The protein resides in the cytoplasm. It catalyses the reaction cytidine(32) in tRNA + S-sulfanyl-L-cysteinyl-[cysteine desulfurase] + AH2 + ATP = 2-thiocytidine(32) in tRNA + L-cysteinyl-[cysteine desulfurase] + A + AMP + diphosphate + H(+). The protein operates within tRNA modification. Functionally, catalyzes the ATP-dependent 2-thiolation of cytidine in position 32 of tRNA, to form 2-thiocytidine (s(2)C32). The sulfur atoms are provided by the cysteine/cysteine desulfurase (IscS) system. The polypeptide is tRNA-cytidine(32) 2-sulfurtransferase (Salmonella heidelberg (strain SL476)).